The sequence spans 335 residues: Acetyl-coenzyme A carboxylase carboxyl transferase subunit alpha (335 aa).

The CoA carboxyltransferase C-terminal domain maps to 38-292 (TLEQKAEELR…ATALSEEIEN (255 aa)).

Belongs to the AccA family. In terms of assembly, acetyl-CoA carboxylase is a heterohexamer composed of biotin carboxyl carrier protein (AccB), biotin carboxylase (AccC) and two subunits each of ACCase subunit alpha (AccA) and ACCase subunit beta (AccD).

It localises to the cytoplasm. It carries out the reaction N(6)-carboxybiotinyl-L-lysyl-[protein] + acetyl-CoA = N(6)-biotinyl-L-lysyl-[protein] + malonyl-CoA. It functions in the pathway lipid metabolism; malonyl-CoA biosynthesis; malonyl-CoA from acetyl-CoA: step 1/1. In terms of biological role, component of the acetyl coenzyme A carboxylase (ACC) complex. First, biotin carboxylase catalyzes the carboxylation of biotin on its carrier protein (BCCP) and then the CO(2) group is transferred by the carboxyltransferase to acetyl-CoA to form malonyl-CoA. The polypeptide is Acetyl-coenzyme A carboxylase carboxyl transferase subunit alpha (Heliobacterium modesticaldum (strain ATCC 51547 / Ice1)).